We begin with the raw amino-acid sequence, 224 residues long: UPF0758 protein mma_2551 (224 aa).

One can recognise an MPN domain in the interval 102–224 (SLNSPQAVKK…VYSFAEHGHL (123 aa)). Zn(2+)-binding residues include histidine 173, histidine 175, and aspartate 186. The short motif at 173 to 186 (HNHPSGSSEPSAAD) is the JAMM motif element.

It belongs to the UPF0758 family.

This is UPF0758 protein mma_2551 from Janthinobacterium sp. (strain Marseille) (Minibacterium massiliensis).